The chain runs to 290 residues: Homeobox protein EMX1 (290 aa).

The homeobox DNA-binding region spans proline 192 to lysine 251. The segment at arginine 249–aspartate 290 is disordered. Over residues glutamine 250 to lysine 263 the composition is skewed to basic and acidic residues.

Belongs to the EMX homeobox family. In terms of assembly, interacts with WRD11 (via the N-terminal and the central portion of the protein); the interaction associates EMX1 with GLI3. Cerebral cortex.

It is found in the nucleus. The protein resides in the cytoplasm. Functionally, transcription factor, which in cooperation with EMX2, acts to generate the boundary between the roof and archipallium in the developing brain. May function in combinations with OTX1/2 to specify cell fates in the developing central nervous system. The sequence is that of Homeobox protein EMX1 from Homo sapiens (Human).